A 584-amino-acid chain; its full sequence is Keratin, type I cytoskeletal 10 (584 aa).

Positions 1–15 (MSVRYSSSKHYSSSR) are enriched in low complexity. The segment at 1 to 24 (MSVRYSSSKHYSSSRSGGGGGGGG) is disordered. Residues 1–145 (MSVRYSSSKH…GGDGGLLSGN (145 aa)) are head. Phosphoserine occurs at positions 14, 16, 42, 53, 56, and 170. The interval 146 to 181 (EKVTMQNLNDRLASYLDKVRALEESNYELEGKIKEW) is coil 1A. Positions 146 to 460 (EKVTMQNLND…SLLEGEGSSG (315 aa)) constitute an IF rod domain. Residues 182–202 (YEKHGNSHQGEPRDYSKYYKT) form a linker 1 region. A coil 1B region spans residues 203 to 294 (IDDLKNQILN…KNHEEEMKDL (92 aa)). A linker 12 region spans residues 295–317 (RNVSTGDVNVEMNAAPGVDLTQL). Positions 318–456 (LNNMRSQYEQ…QTYRSLLEGE (139 aa)) are coil 2. The interval 453-584 (LEGEGSSGGG…GESSSKGPRY (132 aa)) is disordered. Residues 457 to 563 (GSSGGGGRGG…GGGYGGGSSS (107 aa)) show a composition bias toward gly residues. The tail stretch occupies residues 457 to 584 (GSSGGGGRGG…GESSSKGPRY (128 aa)). Low complexity predominate over residues 564–584 (GGHKSSSSGSVGESSSKGPRY).

The protein belongs to the intermediate filament family. As to quaternary structure, heterotetramer of two type I and two type II keratins. Heterodimer with KRT1. Two heterodimers of KRT1 and KRT10 form a heterotetramer. The KRT10 subunit in the heterotetramer is probably disulfide-linked. Interacts with PLEC isoform 1C, when in a heterodimer with KRT1. (Microbial infection) Interacts (via C-terminal tail domain) with the S.aureus clumping factor, clfB; this interaction probably mediates S.aureus attachment to the keratinized squamous epithelial cells from the nasal cavity. In terms of assembly, (Microbial infection) Interacts (via the C-terminal tail domain) with S.pneumoniae serine-rich repeat protein PsrP; this interaction probably mediates S.pneumoniae adherence to lung tissue and subsequent pathogenesis. Neither protein has to be glycosylated for the interaction to occur. Seen in all suprabasal cell layers including stratum corneum. Expressed on the surface of lung cell lines. Localized on the surface of desquamated nasal epithelial cells (at protein level).

It localises to the secreted. Its subcellular location is the extracellular space. The protein localises to the cell surface. It is found in the cytoplasm. Its function is as follows. Plays a role in the establishment of the epidermal barrier on plantar skin. Involved in the maintenance of cell layer development and keratin filament bundles in suprabasal cells of the epithelium. Functionally, (Microbial infection) Acts as a mediator of S.aureus adherence to desquamated nasal epithelial cells via clfB, and hence may play a role in nasal colonization. In terms of biological role, (Microbial infection) Binds S.pneumoniae PsrP, mediating adherence of the bacteria to lung cell lines. Reduction of levels of KRT10 keratin decrease adherence, overexpression increases adherence. Neither protein has to be glycosylated for the interaction to occur. The polypeptide is Keratin, type I cytoskeletal 10 (KRT10) (Homo sapiens (Human)).